The chain runs to 1435 residues: Protein clueless (1435 aa).

Positions 1 to 97 (MALEMDSKNS…KPEGDGDADA (97 aa)) are disordered. Residues 18–35 (AAAATTKTNKAKENNNLA) show a composition bias toward low complexity. Over residues 38–50 (KKNQSQNLVNGNG) the composition is skewed to polar residues. Positions 58–67 (TKKKGKKNRN) are enriched in basic residues. S266 carries the phosphoserine modification. One can recognise a Clu domain in the interval 420 to 662 (RAEDAFSSKL…RTFPPDVNFL (243 aa)). 2 stretches are compositionally biased toward basic and acidic residues: residues 719–731 (KKPEETQSEEKKQ) and 752–762 (PNEKEKDTPVE). 2 disordered regions span residues 719–762 (KKPE…TPVE) and 952–998 (VSND…SSSS). The segment covering 959 to 975 (KKRGGNGGKHNKHKSSK) has biased composition (basic residues). Residues 988–998 (NGGSTTSSSSS) are compositionally biased toward low complexity. TPR repeat units lie at residues 1096–1129 (AYNFYTTGQAKIQQGLFKEGYELISEALNLLNNV), 1222–1255 (ALIDSNISLILHALGEYELSLRFIEHALKLNLKY), and 1257–1290 (GNKAMHVAVSYHLMARTQSCMGDFRSALNNEKET). Positions 1407–1435 (EVLAPQDNNKEQAATAQQLTNGDKVAVSS) are disordered. Over residues 1417-1435 (EQAATAQQLTNGDKVAVSS) the composition is skewed to polar residues.

This sequence belongs to the CLU family.

It localises to the cytoplasm. MRNA-binding protein involved in proper cytoplasmic distribution of mitochondria. The protein is Protein clueless of Drosophila persimilis (Fruit fly).